We begin with the raw amino-acid sequence, 136 residues long: Translation initiation factor 5A (136 aa).

K37 bears the Hypusine mark.

It belongs to the eIF-5A family.

It localises to the cytoplasm. Functionally, functions by promoting the formation of the first peptide bond. This Thermococcus kodakarensis (strain ATCC BAA-918 / JCM 12380 / KOD1) (Pyrococcus kodakaraensis (strain KOD1)) protein is Translation initiation factor 5A.